The following is a 181-amino-acid chain: Large ribosomal subunit protein uL5 (181 aa).

The protein belongs to the universal ribosomal protein uL5 family. As to quaternary structure, part of the 50S ribosomal subunit; part of the 5S rRNA/L5/L18/L25 subcomplex. Contacts the 5S rRNA and the P site tRNA. Forms a bridge to the 30S subunit in the 70S ribosome.

This is one of the proteins that bind and probably mediate the attachment of the 5S RNA into the large ribosomal subunit, where it forms part of the central protuberance. In the 70S ribosome it contacts protein S13 of the 30S subunit (bridge B1b), connecting the 2 subunits; this bridge is implicated in subunit movement. Contacts the P site tRNA; the 5S rRNA and some of its associated proteins might help stabilize positioning of ribosome-bound tRNAs. The sequence is that of Large ribosomal subunit protein uL5 from Helicobacter pylori (strain HPAG1).